Consider the following 363-residue polypeptide: MSAIYNFCAGPAMLPAAVMKKAQQELLDWNGLGVSVMEVSHRGKEFIALTKQAEADLRELMHIPQNYHVLFMHGGGRGQFSAVVNNFLGNQGRALYLVSGQWSSAALAEAQKLAGDTQIDSLNIVEKHNGLNAVVLPELHKIDADYRYVHYCPNETVDGIEIFDELDSPWPIVADLSSTIMSREIDVSRYGLIYAGAQKNIGPSGLSIVIVRDDMLKLPSLTQSSIMDYRLAVEHDSMFNTPPTFAWYLAAEVFAWLKSLGGVASIAKINQQKAQMLYACIDANPFYKNGVVAANRSQMNVTFQLADESLDGAFLKEAEAAGLVALKGHRIVGGMRASLYNAMPLEGVAALVSFMNEFAAKHS.

Arg-42 contributes to the L-glutamate binding site. Residues 76-77, Trp-102, Thr-156, Asp-175, and Gln-198 contribute to the pyridoxal 5'-phosphate site; that span reads GR. Lys-199 bears the N6-(pyridoxal phosphate)lysine mark. 240–241 lines the pyridoxal 5'-phosphate pocket; it reads NT.

This sequence belongs to the class-V pyridoxal-phosphate-dependent aminotransferase family. SerC subfamily. In terms of assembly, homodimer. Pyridoxal 5'-phosphate serves as cofactor.

The protein localises to the cytoplasm. The enzyme catalyses O-phospho-L-serine + 2-oxoglutarate = 3-phosphooxypyruvate + L-glutamate. The catalysed reaction is 4-(phosphooxy)-L-threonine + 2-oxoglutarate = (R)-3-hydroxy-2-oxo-4-phosphooxybutanoate + L-glutamate. It participates in amino-acid biosynthesis; L-serine biosynthesis; L-serine from 3-phospho-D-glycerate: step 2/3. It functions in the pathway cofactor biosynthesis; pyridoxine 5'-phosphate biosynthesis; pyridoxine 5'-phosphate from D-erythrose 4-phosphate: step 3/5. Functionally, catalyzes the reversible conversion of 3-phosphohydroxypyruvate to phosphoserine and of 3-hydroxy-2-oxo-4-phosphonooxybutanoate to phosphohydroxythreonine. This Shewanella sp. (strain ANA-3) protein is Phosphoserine aminotransferase.